The sequence spans 402 residues: UDP-glucose 6-dehydrogenase (402 aa).

NAD(+)-binding positions include 2–19, Val11, Asp29, Lys34, Thr83, Thr118, and Glu145; that span reads KIAVAGSGYVGLSLGVLL. Substrate-binding positions include 141–145, Lys204, Asn208, 249–253, and Gly257; these read EFLRE and YNNPS. Tyr259 is a binding site for NAD(+). Cys260 functions as the Nucleophile in the catalytic mechanism. Lys263 lines the NAD(+) pocket. Residue Lys320 coordinates substrate. Arg327 contributes to the NAD(+) binding site.

Belongs to the UDP-glucose/GDP-mannose dehydrogenase family.

The enzyme catalyses UDP-alpha-D-glucose + 2 NAD(+) + H2O = UDP-alpha-D-glucuronate + 2 NADH + 3 H(+). Its pathway is nucleotide-sugar biosynthesis; UDP-alpha-D-glucuronate biosynthesis; UDP-alpha-D-glucuronate from UDP-alpha-D-glucose: step 1/1. Catalyzes the formation of UDP-glucuronic acid which is required for capsular hyaluronic acid synthesis. The polypeptide is UDP-glucose 6-dehydrogenase (hasB) (Streptococcus pyogenes serotype M1).